We begin with the raw amino-acid sequence, 338 residues long: tRNA-specific 2-thiouridylase MnmA (338 aa).

ATP is bound by residues 6 to 13 (AMSGGVDS) and Met32. Residue Cys92 is the Nucleophile of the active site. Cys92 and Cys186 form a disulfide bridge. Gly116 is an ATP binding site. The interaction with tRNA stretch occupies residues 134–136 (KDQ). Cys186 serves as the catalytic Cysteine persulfide intermediate. Residues 288–289 (RY) form an interaction with tRNA region.

Belongs to the MnmA/TRMU family.

The protein resides in the cytoplasm. It catalyses the reaction S-sulfanyl-L-cysteinyl-[protein] + uridine(34) in tRNA + AH2 + ATP = 2-thiouridine(34) in tRNA + L-cysteinyl-[protein] + A + AMP + diphosphate + H(+). Its function is as follows. Catalyzes the 2-thiolation of uridine at the wobble position (U34) of tRNA, leading to the formation of s(2)U34. The protein is tRNA-specific 2-thiouridylase MnmA of Campylobacter jejuni subsp. jejuni serotype O:6 (strain 81116 / NCTC 11828).